Consider the following 123-residue polypeptide: uncharacterized protein (123 aa).

3 consecutive transmembrane segments (helical) span residues 7–29 (VKHL…FDAV), 44–66 (FFIH…VHRI), and 79–101 (LGLY…AAMA).

It localises to the cell membrane. This is an uncharacterized protein from Bacillus subtilis (strain 168).